We begin with the raw amino-acid sequence, 251 residues long: Triosephosphate isomerase (251 aa).

9–11 (NWK) serves as a coordination point for substrate. H95 serves as the catalytic Electrophile. The Proton acceptor role is filled by E167. Residues G173, S212, and 233–234 (GG) each bind substrate.

Belongs to the triosephosphate isomerase family. Homodimer.

The protein resides in the cytoplasm. The catalysed reaction is D-glyceraldehyde 3-phosphate = dihydroxyacetone phosphate. It functions in the pathway carbohydrate biosynthesis; gluconeogenesis. It participates in carbohydrate degradation; glycolysis; D-glyceraldehyde 3-phosphate from glycerone phosphate: step 1/1. In terms of biological role, involved in the gluconeogenesis. Catalyzes stereospecifically the conversion of dihydroxyacetone phosphate (DHAP) to D-glyceraldehyde-3-phosphate (G3P). The polypeptide is Triosephosphate isomerase (Pseudomonas putida (strain GB-1)).